Consider the following 105-residue polypeptide: Fluoride-specific ion channel FluC (105 aa).

Transmembrane regions (helical) follow at residues 14–34 (FPLPILTVNVLGSFLMGVFVV), 44–64 (LSPLVMTGLLGGFTTFSAFSL), and 79–99 (ALYVALSVGLSIAGLMAGLWL). Residues Gly54 and Thr57 each contribute to the Na(+) site.

This sequence belongs to the fluoride channel Fluc/FEX (TC 1.A.43) family.

It localises to the cell inner membrane. It carries out the reaction fluoride(in) = fluoride(out). Its activity is regulated as follows. Na(+) is not transported, but it plays an essential structural role and its presence is essential for fluoride channel function. Fluoride-specific ion channel. Important for reducing fluoride concentration in the cell, thus reducing its toxicity. This is Fluoride-specific ion channel FluC from Jannaschia sp. (strain CCS1).